We begin with the raw amino-acid sequence, 687 residues long: Phage-like element PBSX protein XkdV (687 aa).

This sequence to B.subtilis YqcC.

This chain is Phage-like element PBSX protein XkdV (xkdV), found in Bacillus subtilis (strain 168).